A 473-amino-acid polypeptide reads, in one-letter code: Photosystem II CP43 reaction center protein (473 aa).

The propeptide occupies 1–14 (MKTLYSLRRFYHVE). An N-acetylthreonine modification is found at threonine 15. Residue threonine 15 is modified to Phosphothreonine. 5 consecutive transmembrane segments (helical) span residues 69-93 (LFEV…PHLA), 134-155 (LIGP…KDKN), 178-200 (KACY…RIIT), 255-275 (KPWA…LSYS), and 291-312 (WFNN…ASQA). Residue glutamate 367 participates in [CaMn4O5] cluster binding. A helical membrane pass occupies residues 447 to 471 (RARAAAAGFEKGIERETEPVLFMKP).

It belongs to the PsbB/PsbC family. PsbC subfamily. PSII is composed of 1 copy each of membrane proteins PsbA, PsbB, PsbC, PsbD, PsbE, PsbF, PsbH, PsbI, PsbJ, PsbK, PsbL, PsbM, PsbT, PsbX, PsbY, PsbZ, Psb30/Ycf12, at least 3 peripheral proteins of the oxygen-evolving complex and a large number of cofactors. It forms dimeric complexes. Requires Binds multiple chlorophylls and provides some of the ligands for the Ca-4Mn-5O cluster of the oxygen-evolving complex. It may also provide a ligand for a Cl- that is required for oxygen evolution. PSII binds additional chlorophylls, carotenoids and specific lipids. as cofactor.

The protein resides in the plastid. It localises to the chloroplast thylakoid membrane. In terms of biological role, one of the components of the core complex of photosystem II (PSII). It binds chlorophyll and helps catalyze the primary light-induced photochemical processes of PSII. PSII is a light-driven water:plastoquinone oxidoreductase, using light energy to abstract electrons from H(2)O, generating O(2) and a proton gradient subsequently used for ATP formation. In Mesostigma viride (Green alga), this protein is Photosystem II CP43 reaction center protein.